The primary structure comprises 160 residues: Cyclic pyranopterin monophosphate synthase (160 aa).

Substrate-binding positions include 76–78 (MCH) and 113–114 (ME). Residue Asp128 is part of the active site.

This sequence belongs to the MoaC family. Homohexamer; trimer of dimers.

The catalysed reaction is (8S)-3',8-cyclo-7,8-dihydroguanosine 5'-triphosphate = cyclic pyranopterin phosphate + diphosphate. It participates in cofactor biosynthesis; molybdopterin biosynthesis. Its function is as follows. Catalyzes the conversion of (8S)-3',8-cyclo-7,8-dihydroguanosine 5'-triphosphate to cyclic pyranopterin monophosphate (cPMP). The chain is Cyclic pyranopterin monophosphate synthase from Brevibacillus brevis (strain 47 / JCM 6285 / NBRC 100599).